The sequence spans 735 residues: Catalase-peroxidase (735 aa).

The segment at 1 to 25 (MSDSKCPVTGKSSRQVAGGGTSNRD) is disordered. The segment at residues 95 to 223 (WHSAGTYRMG…LAAVQMGLIY (129 aa)) is a cross-link (tryptophyl-tyrosyl-methioninium (Trp-Tyr) (with M-249)). The active-site Proton acceptor is the His96. The segment at residues 223 to 249 (YINPEGPDGNPDPVASGRDVRETFARM) is a cross-link (tryptophyl-tyrosyl-methioninium (Tyr-Met) (with W-95)). A heme b-binding site is contributed by His264.

It belongs to the peroxidase family. Peroxidase/catalase subfamily. As to quaternary structure, homodimer or homotetramer. Requires heme b as cofactor. Formation of the three residue Trp-Tyr-Met cross-link is important for the catalase, but not the peroxidase activity of the enzyme.

The catalysed reaction is H2O2 + AH2 = A + 2 H2O. It carries out the reaction 2 H2O2 = O2 + 2 H2O. Bifunctional enzyme with both catalase and broad-spectrum peroxidase activity. The chain is Catalase-peroxidase from Trichlorobacter lovleyi (strain ATCC BAA-1151 / DSM 17278 / SZ) (Geobacter lovleyi).